A 216-amino-acid polypeptide reads, in one-letter code: Adenylate kinase (216 aa).

ATP is bound at residue 10–15 (GAGKGT). The NMP stretch occupies residues 30–59 (STGDIFRANIKEKTPLGIEAKRYIDNGQLV). AMP-binding positions include Thr-31, Arg-36, 57 to 59 (QLV), 85 to 88 (GFPR), and Gln-92. The tract at residues 126-163 (GRRVCTSCGASYHIRFNPPKIEGKCDICDNELIQRKDD) is LID. Arg-127 contributes to the ATP binding site. Zn(2+) contacts are provided by Cys-130 and Cys-133. 136-137 (SY) serves as a coordination point for ATP. Zn(2+) contacts are provided by Cys-150 and Cys-153. AMP contacts are provided by Arg-160 and Arg-171. Glu-199 serves as a coordination point for ATP.

Belongs to the adenylate kinase family. In terms of assembly, monomer.

The protein resides in the cytoplasm. The catalysed reaction is AMP + ATP = 2 ADP. The protein operates within purine metabolism; AMP biosynthesis via salvage pathway; AMP from ADP: step 1/1. Functionally, catalyzes the reversible transfer of the terminal phosphate group between ATP and AMP. Plays an important role in cellular energy homeostasis and in adenine nucleotide metabolism. This chain is Adenylate kinase, found in Clostridium botulinum (strain 657 / Type Ba4).